A 251-amino-acid chain; its full sequence is Ribosome maturation factor RimP (251 aa).

The disordered stretch occupies residues 176-251 (SLRRGSAPPQ…ARLKNRDTLH (76 aa)). Over residues 186–196 (DGEEGDEEEGA) the composition is skewed to acidic residues. Over residues 216 to 226 (PKLDKKSDKPV) the composition is skewed to basic and acidic residues.

This sequence belongs to the RimP family.

The protein localises to the cytoplasm. Functionally, required for maturation of 30S ribosomal subunits. This chain is Ribosome maturation factor RimP, found in Methylorubrum extorquens (strain PA1) (Methylobacterium extorquens).